The following is a 173-amino-acid chain: MRVDIVPVGDVPAHVKRQASSSLRSVYDCEVVVASEQDVPTAAYDEARSQYRAAEFIDTATRATSGDKTIAITPHDLFYRRRNYVFGLAYLDGRGCVVSTYRLQTSSDGGFSNRSSSDVFDDRVRKEVVHELGHTLGLEHCDNNRCAMNFSPTVREVDRKEENLCGSCQRTVF.

Zn(2+) is bound at residue His130. Glu131 functions as the Proton acceptor in the catalytic mechanism. Zn(2+)-binding residues include His134, His140, Cys141, Cys146, Cys165, and Cys168.

This sequence belongs to the peptidase M54 family. In terms of assembly, monomer. Requires Zn(2+) as cofactor.

Functionally, probable zinc metalloprotease whose natural substrate is unknown. The chain is Archaemetzincin from Halobacterium salinarum (strain ATCC 29341 / DSM 671 / R1).